The primary structure comprises 227 residues: Probable GTP-binding protein EngB (227 aa).

In terms of domain architecture, EngB-type G spans 41 to 216 (GRPEVAFAGR…RAEIARFAVP (176 aa)). GTP is bound by residues 49-56 (GRSNVGKS), 76-80 (GRTKQ), 94-97 (DMPG), 161-164 (TKCD), and 195-197 (TSS). The Mg(2+) site is built by serine 56 and threonine 78.

Belongs to the TRAFAC class TrmE-Era-EngA-EngB-Septin-like GTPase superfamily. EngB GTPase family. The cofactor is Mg(2+).

Functionally, necessary for normal cell division and for the maintenance of normal septation. In Gluconobacter oxydans (strain 621H) (Gluconobacter suboxydans), this protein is Probable GTP-binding protein EngB.